The following is a 189-amino-acid chain: Stathmin-4 (189 aa).

2 S-palmitoyl cysteine lipidation sites follow: C20 and C22. Residues 48–189 (SDMEVIELNK…NKELKEEASR (142 aa)) form the SLD domain. Residues E54 and S90 each carry the phosphoserine modification. A coiled-coil region spans residues 90 to 189 (SLEEIQKKLE…NKELKEEASR (100 aa)). The disordered stretch occupies residues 168 to 189 (QEKDKHAEEVRKNKELKEEASR).

Belongs to the stathmin family. Nervous tissue.

It localises to the golgi apparatus. The protein resides in the cell projection. The protein localises to the growth cone. It is found in the axon. Its function is as follows. Exhibits microtubule-destabilizing activity. The chain is Stathmin-4 (Stmn4) from Rattus norvegicus (Rat).